A 288-amino-acid polypeptide reads, in one-letter code: Probable prolyl 4-hydroxylase 9 (288 aa).

Topologically, residues Met-1–Lys-12 are cytoplasmic. The chain crosses the membrane as a helical; Signal-anchor for type II membrane protein span at residues Leu-13–Ser-33. Over Thr-34 to Glu-288 the chain is Lumenal. The Fe2OG dioxygenase domain occupies His-164 to Asp-283. Positions 182 and 184 each coordinate Fe cation. Residues Asn-221 and Asn-255 are each glycosylated (N-linked (GlcNAc...) asparagine). His-264 lines the Fe cation pocket. Lys-274 provides a ligand contact to 2-oxoglutarate.

This sequence belongs to the P4HA family. Fe(2+) serves as cofactor. It depends on L-ascorbate as a cofactor.

It is found in the endoplasmic reticulum membrane. The protein resides in the golgi apparatus. The enzyme catalyses L-prolyl-[collagen] + 2-oxoglutarate + O2 = trans-4-hydroxy-L-prolyl-[collagen] + succinate + CO2. Its function is as follows. Catalyzes the post-translational formation of 4-hydroxyproline in -Xaa-Pro-Gly- sequences in proline-rich peptide sequences of plant glycoproteins and other proteins. Hydroxyprolines are important constituent of many plant cell wall glycoproteins such as extensins, hydroxyproline-rich glycoproteins, lectins and arabinogalactan proteins. In Arabidopsis thaliana (Mouse-ear cress), this protein is Probable prolyl 4-hydroxylase 9.